Reading from the N-terminus, the 329-residue chain is Mitochondrial substrate carrier family protein Q (329 aa).

Solcar repeat units lie at residues 18–115, 125–206, and 216–310; these read VEAL…LKSI, LGTI…LRAL, and LGGL…VVIH. 6 consecutive transmembrane segments (helical) span residues 21 to 41, 95 to 115, 131 to 151, 175 to 195, 221 to 241, and 298 to 318; these read LGHAISGGVAGMAAIALTYPF, LIGIGASSFVYYYWYTLLKSI, LAIAALAGCANVLTTLPIWVV, GFGGLYKGLIPALILVSNPSV, VFILGAIAKLIAGIVTYPYLL, and AFMFLVKDKVVIHAVAILFYL.

Belongs to the mitochondrial carrier (TC 2.A.29) family.

The protein localises to the peroxisome membrane. May have transport activity. The chain is Mitochondrial substrate carrier family protein Q (mcfQ) from Dictyostelium discoideum (Social amoeba).